Here is a 517-residue protein sequence, read N- to C-terminus: 2-isopropylmalate synthase (517 aa).

One can recognise a Pyruvate carboxyltransferase domain in the interval 4–266; sequence INFFDTTLRD…ESTIQLNEIK (263 aa). D13, H201, H203, and N237 together coordinate Mn(2+). A regulatory domain region spans residues 391-517; that stretch reads EFESLQVHYG…IEIEKHHAIS (127 aa).

It belongs to the alpha-IPM synthase/homocitrate synthase family. LeuA type 1 subfamily. Homodimer. It depends on Mn(2+) as a cofactor.

Its subcellular location is the cytoplasm. The catalysed reaction is 3-methyl-2-oxobutanoate + acetyl-CoA + H2O = (2S)-2-isopropylmalate + CoA + H(+). It participates in amino-acid biosynthesis; L-leucine biosynthesis; L-leucine from 3-methyl-2-oxobutanoate: step 1/4. Catalyzes the condensation of the acetyl group of acetyl-CoA with 3-methyl-2-oxobutanoate (2-ketoisovalerate) to form 3-carboxy-3-hydroxy-4-methylpentanoate (2-isopropylmalate). The polypeptide is 2-isopropylmalate synthase (Bacillus pumilus (strain SAFR-032)).